A 567-amino-acid polypeptide reads, in one-letter code: MFPGLAAAAAAHRCSWAALCRLGGGRAATRGRSQGWKNVMTFESFTYVVPDIHPHLSIINQVKLYSTNVQKGGQGSQTPKADKVPSLTQTVENIGAELKAPLKQDPLQVRVKAVLKKRDYGSKYTKNNFITGVRAINEFCLKSSDLEQLRKIRRRSPHDDTESFTVFLRSDVEAKALEVWGSLEALAREKKLRKEAEIEYRERLFRNQRILREYGDFLGNTKPRSRAVSVFLKGPGKVVMVAICINGLNCFFKFLAWIYTGSASMFSEAIHSLSDTCNQGLLALGISKSVQTPDPSHPYGFSNMRYISSLISGVGIFMMGAGLSWYHGIMGLLHPQPMESLLWAYCILAGSLVSEGATLLVAINELRRSAQAKGTTFYKYVMESRDPSTNVILLEDTAAVLGVIIAATCMGLTSITGNPLYDSLGSLGVGTLLGVVSAFLIYTNTEALLGRSIQPEQVQRLTELLESDPSVRAIHDVKATDLGLGKVRFKAEVDFDGRVVTRSYLEKQDFDQMMQEIQEVKTPEQLEAFMLKHGENIIDTLGAEVDRLEKELKKRNPEVRHVDLEIL.

Transmembrane regions (helical) follow at residues 238 to 258, 313 to 333, 341 to 361, 391 to 411, and 423 to 443; these read VVMVAICINGLNCFFKFLAWI, GVGIFMMGAGLSWYHGIMGLL, LLWAYCILAGSLVSEGATLLV, VILLEDTAAVLGVIIAATCMG, and SLGSLGVGTLLGVVSAFLIYT. An LXXLL motif motif is present at residues 461–465; sequence LTELL.

It belongs to the cation diffusion facilitator (CDF) transporter (TC 2.A.4) family. SLC30A subfamily. As to quaternary structure, interacts with GRIP1, ESR1, AR and CTNNB1.

The protein localises to the mitochondrion membrane. It is found in the nucleus. Its subcellular location is the endoplasmic reticulum. The enzyme catalyses Zn(2+)(in) + 2 H(+)(out) = Zn(2+)(out) + 2 H(+)(in). Functionally, acts as a zinc transporter involved in intracellular zinc homeostasis. Functions as a secondary coactivator for nuclear receptors by cooperating with p160 coactivators subtypes. Plays a role in transcriptional activation of Wnt-responsive genes. Mitochondrial proton-coupled zinc ion antiporter mediating the export of zinc from the mitochondria and involved in zinc homeostasis, zinc mobilization as well as mitochondrial morphology and health. In nucleus, functions as a secondary coactivator for nuclear receptors by cooperating with p160 coactivators subtypes. Plays a role in transcriptional activation of Wnt-responsive genes. This chain is Proton-coupled zinc antiporter SLC30A9, mitochondrial (Slc30a9), found in Mus musculus (Mouse).